Here is a 459-residue protein sequence, read N- to C-terminus: tRNA modification GTPase MnmE (459 aa).

3 residues coordinate (6S)-5-formyl-5,6,7,8-tetrahydrofolate: Arg29, Glu91, and Arg130. In terms of domain architecture, TrmE-type G spans 225 to 381; sequence GVKVAIVGRP…LEEALEQLVT (157 aa). A K(+)-binding site is contributed by Asn235. GTP is bound by residues 235–240, 254–260, and 279–282; these read NVGKSS, TDLPGTT, and DTAG. Ser239 provides a ligand contact to Mg(2+). K(+) contacts are provided by Thr254, Leu256, and Thr259. Residue Thr260 participates in Mg(2+) binding. Position 459 (Lys459) interacts with (6S)-5-formyl-5,6,7,8-tetrahydrofolate.

This sequence belongs to the TRAFAC class TrmE-Era-EngA-EngB-Septin-like GTPase superfamily. TrmE GTPase family. In terms of assembly, homodimer. Heterotetramer of two MnmE and two MnmG subunits. The cofactor is K(+).

The protein resides in the cytoplasm. Functionally, exhibits a very high intrinsic GTPase hydrolysis rate. Involved in the addition of a carboxymethylaminomethyl (cmnm) group at the wobble position (U34) of certain tRNAs, forming tRNA-cmnm(5)s(2)U34. This is tRNA modification GTPase MnmE from Synechococcus sp. (strain JA-3-3Ab) (Cyanobacteria bacterium Yellowstone A-Prime).